A 360-amino-acid polypeptide reads, in one-letter code: Peptide chain release factor 1 (360 aa).

Residue Gln-237 is modified to N5-methylglutamine.

Belongs to the prokaryotic/mitochondrial release factor family. Post-translationally, methylated by PrmC. Methylation increases the termination efficiency of RF1.

It is found in the cytoplasm. Peptide chain release factor 1 directs the termination of translation in response to the peptide chain termination codons UAG and UAA. In Pseudomonas syringae pv. syringae (strain B728a), this protein is Peptide chain release factor 1.